Reading from the N-terminus, the 121-residue chain is Large ribosomal subunit protein uL14 (121 aa).

The protein belongs to the universal ribosomal protein uL14 family. As to quaternary structure, part of the 50S ribosomal subunit. Forms a cluster with proteins L3 and L19. In the 70S ribosome, L14 and L19 interact and together make contacts with the 16S rRNA in bridges B5 and B8.

Its function is as follows. Binds to 23S rRNA. Forms part of two intersubunit bridges in the 70S ribosome. This chain is Large ribosomal subunit protein uL14, found in Synechococcus sp. (strain CC9311).